The sequence spans 379 residues: MTSLHLKKFRRIVVKVGSSLLIDSDAGEVRAAWLSALADDIAGLHGEGRDVLIVSSGSIALGRSKLKLPRGPLKLEESQAAAAVGQIALARIWSKVLGDHGIGAGQILVTLQDTEERRRYLNARSTIAKLLDWRAVPVINENDTVATNEIRYGDNDRLAARVATMASADLLILLSDIDGLYDAPPHLNPDAKLIPVVKRVTADIEAMAGSAASELSRGGMQTKIEAAKIATTAGTHMLIASGKIEHPLRAVMDGGRCTWFMTPANPVTARKRWIAGSLEPKGTLTIDAGAVAALRAGKSLLPAGVIRVDGQFARGDAVIVRGPNTHEIGRGLVAYDAVDAEKIKGRSSCDAAQILGISGRAEMIHRDDLVVGGPRGGAG.

An ATP-binding site is contributed by K15. The substrate site is built by S56, D143, and N155. 175-176 (SD) contributes to the ATP binding site. The PUA domain maps to 281 to 358 (KGTLTIDAGA…CDAAQILGIS (78 aa)).

The protein belongs to the glutamate 5-kinase family.

Its subcellular location is the cytoplasm. It catalyses the reaction L-glutamate + ATP = L-glutamyl 5-phosphate + ADP. It participates in amino-acid biosynthesis; L-proline biosynthesis; L-glutamate 5-semialdehyde from L-glutamate: step 1/2. Catalyzes the transfer of a phosphate group to glutamate to form L-glutamate 5-phosphate. The sequence is that of Glutamate 5-kinase from Nitrobacter hamburgensis (strain DSM 10229 / NCIMB 13809 / X14).